Reading from the N-terminus, the 159-residue chain is Transcriptional repressor NrdR (159 aa).

The segment at C3–C34 is a zinc-finger region. In terms of domain architecture, ATP-cone spans P49–E139.

Belongs to the NrdR family. Zn(2+) serves as cofactor.

In terms of biological role, negatively regulates transcription of bacterial ribonucleotide reductase nrd genes and operons by binding to NrdR-boxes. The sequence is that of Transcriptional repressor NrdR from Burkholderia pseudomallei (strain 1106a).